We begin with the raw amino-acid sequence, 308 residues long: Cytochrome b (308 aa).

A run of 4 helical transmembrane segments spans residues 1-21 (SGSL…FLAA), 45-66 (WLIR…YLHI), 81-101 (WNIG…GYVL), and 146-166 (FFAL…VHLT). Heme b contacts are provided by histidine 51 and histidine 65. Heme b contacts are provided by histidine 150 and histidine 164. Histidine 169 is a binding site for a ubiquinone. The next 3 membrane-spanning stretches (helical) occupy residues 194 to 214 (TKDV…ALFS), 256 to 276 (LGGV…PLLH), and 288 to 308 (LSQI…WVGS).

This sequence belongs to the cytochrome b family. The cytochrome bc1 complex contains 11 subunits: 3 respiratory subunits (MT-CYB, CYC1 and UQCRFS1), 2 core proteins (UQCRC1 and UQCRC2) and 6 low-molecular weight proteins (UQCRH/QCR6, UQCRB/QCR7, UQCRQ/QCR8, UQCR10/QCR9, UQCR11/QCR10 and a cleavage product of UQCRFS1). This cytochrome bc1 complex then forms a dimer. Requires heme b as cofactor.

It localises to the mitochondrion inner membrane. Functionally, component of the ubiquinol-cytochrome c reductase complex (complex III or cytochrome b-c1 complex) that is part of the mitochondrial respiratory chain. The b-c1 complex mediates electron transfer from ubiquinol to cytochrome c. Contributes to the generation of a proton gradient across the mitochondrial membrane that is then used for ATP synthesis. This chain is Cytochrome b (MT-CYB), found in Garritornis isidorei (Papuan babbler).